The primary structure comprises 445 residues: Phosphoglucosamine mutase (445 aa).

The Phosphoserine intermediate role is filled by Ser-101. Residues Ser-101, Asp-240, Asp-242, and Asp-244 each coordinate Mg(2+). Ser-101 is modified (phosphoserine).

This sequence belongs to the phosphohexose mutase family. Mg(2+) is required as a cofactor. In terms of processing, activated by phosphorylation.

The catalysed reaction is alpha-D-glucosamine 1-phosphate = D-glucosamine 6-phosphate. Its function is as follows. Catalyzes the conversion of glucosamine-6-phosphate to glucosamine-1-phosphate. The protein is Phosphoglucosamine mutase of Pseudomonas fluorescens (strain Pf0-1).